The chain runs to 443 residues: Xaa-Pro dipeptidase (443 aa).

5 residues coordinate Mn(2+): D244, D255, H339, E384, and E423.

This sequence belongs to the peptidase M24B family. Bacterial-type prolidase subfamily. The cofactor is Mn(2+).

The catalysed reaction is Xaa-L-Pro dipeptide + H2O = an L-alpha-amino acid + L-proline. Its function is as follows. Splits dipeptides with a prolyl residue in the C-terminal position. In Pseudoalteromonas atlantica (strain T6c / ATCC BAA-1087), this protein is Xaa-Pro dipeptidase.